The chain runs to 420 residues: MLRKLTPLALALLPLVAGQTIGETPEVHPKLPTWKCSNRHGCVKQDTSVVIDAATHWIHEKGGETSCTGSSGPNPNLCPDKETCAANCVIEGISDYANYGVQTKGSSMTLHQYLRDGNTTKSVSPRVYLLAEDGENYEMLQLLNQEFTFDVDVSTLVCGMNGALYFSEMQRDGGRSELNPAGAARGTGYCDAQCFNIPWINGEANVEGAGACCNEMDIWEANARATGYTPHPCNITQLYECSGAECEANGVCDKPGCGFNPYALGAHDFYGYDLEVDTTKPMTVVTQFYTKDNTTTGALVEIRRLYVQNGHVIQNAVVSVDGESVDSITADYCADPSSAFNRLGGLQRMGEALGRGMVLAFSVWNDAGSFMSWLDGGNSGPCNATEGDPALIEKLHPDTHVTFSNIRWGDIGSTYRGKRR.

The signal sequence occupies residues 1–18 (MLRKLTPLALALLPLVAG). An N-linked (GlcNAc...) asparagine glycan is attached at Asn118. Glu215 functions as the Nucleophile in the catalytic mechanism. Glu220 (proton donor) is an active-site residue. Residues Asn234, Asn293, and Asn383 are each glycosylated (N-linked (GlcNAc...) asparagine).

Belongs to the glycosyl hydrolase 7 (cellulase C) family.

The protein localises to the secreted. The catalysed reaction is Endohydrolysis of (1-&gt;4)-beta-D-glucosidic linkages in cellulose, lichenin and cereal beta-D-glucans.. Its function is as follows. Has endoglucanase activity on substrates containing beta-1,4 glycosidic bonds, like in carboxymethylcellulose (CMC), hydroxyethylcellulose (HEC) and beta-glucan. Involved in the degradation of complex natural cellulosic substrates. In Aspergillus terreus (strain NIH 2624 / FGSC A1156), this protein is Probable endo-beta-1,4-glucanase celB (celB).